The primary structure comprises 396 residues: Flap endonuclease 1 (396 aa).

The N-domain stretch occupies residues methionine 1–lysine 104. Aspartate 34 contributes to the Mg(2+) binding site. 2 residues coordinate DNA: arginine 47 and arginine 70. Residues aspartate 86, glutamate 158, glutamate 160, aspartate 179, and aspartate 181 each contribute to the Mg(2+) site. The interval aspartate 122–histidine 255 is I-domain. Glutamate 158 lines the DNA pocket. DNA-binding residues include glycine 233 and aspartate 235. Mg(2+) is bound at residue aspartate 235. Positions methionine 338 to glycine 396 are disordered. An interaction with PCNA region spans residues glutamine 342–phenylalanine 350. Residues proline 352–alanine 384 are compositionally biased toward basic and acidic residues. Positions lysine 385 to glycine 396 are enriched in basic residues.

The protein belongs to the XPG/RAD2 endonuclease family. FEN1 subfamily. In terms of assembly, interacts with PCNA. Three molecules of FEN1 bind to one PCNA trimer with each molecule binding to one PCNA monomer. PCNA stimulates the nuclease activity without altering cleavage specificity. Mg(2+) serves as cofactor. Phosphorylated. Phosphorylation upon DNA damage induces relocalization to the nuclear plasma.

The protein resides in the nucleus. It is found in the nucleolus. It localises to the nucleoplasm. The protein localises to the mitochondrion. In terms of biological role, structure-specific nuclease with 5'-flap endonuclease and 5'-3' exonuclease activities involved in DNA replication and repair. During DNA replication, cleaves the 5'-overhanging flap structure that is generated by displacement synthesis when DNA polymerase encounters the 5'-end of a downstream Okazaki fragment. It enters the flap from the 5'-end and then tracks to cleave the flap base, leaving a nick for ligation. Also involved in the long patch base excision repair (LP-BER) pathway, by cleaving within the apurinic/apyrimidinic (AP) site-terminated flap. Acts as a genome stabilization factor that prevents flaps from equilibrating into structures that lead to duplications and deletions. Also possesses 5'-3' exonuclease activity on nicked or gapped double-stranded DNA, and exhibits RNase H activity. Also involved in replication and repair of rDNA and in repairing mitochondrial DNA. This is Flap endonuclease 1 from Phaeosphaeria nodorum (strain SN15 / ATCC MYA-4574 / FGSC 10173) (Glume blotch fungus).